The sequence spans 294 residues: Cell division protein ZipA (294 aa).

Position 1 (Met-1) is a topological domain, periplasmic. A helical transmembrane segment spans residues 2–22; the sequence is EIGLREWLILIGIIVIAGILF. The Cytoplasmic segment spans residues 23 to 294; that stretch reads DGWRRMRGGK…FERRALTQKR (272 aa). 2 disordered regions span residues 64–111 and 126–146; these read THKE…GDLN and KDDFVADNNRHGAAATPSTPV. Over residues 82-91 the composition is skewed to basic and acidic residues; sequence ARERERDPKP.

Belongs to the ZipA family. In terms of assembly, interacts with FtsZ via their C-terminal domains.

The protein localises to the cell inner membrane. In terms of biological role, essential cell division protein that stabilizes the FtsZ protofilaments by cross-linking them and that serves as a cytoplasmic membrane anchor for the Z ring. Also required for the recruitment to the septal ring of downstream cell division proteins. The chain is Cell division protein ZipA from Pseudomonas entomophila (strain L48).